The primary structure comprises 320 residues: Nucleotide-binding protein Psyc_0118 (320 aa).

32–39 provides a ligand contact to ATP; that stretch reads GRSGSGKT. 82 to 85 serves as a coordination point for GTP; it reads DIRT.

It belongs to the RapZ-like family.

Functionally, displays ATPase and GTPase activities. This Psychrobacter arcticus (strain DSM 17307 / VKM B-2377 / 273-4) protein is Nucleotide-binding protein Psyc_0118.